The sequence spans 547 residues: Inositol-tetrakisphosphate 1-kinase 6 (547 aa).

Position 263 (Lys-263) interacts with 1D-myo-inositol 1,3,4-trisphosphate. The ATP site is built by Arg-317 and Lys-370. In terms of domain architecture, ATP-grasp spans 327–539 (LEGLSAEGRP…FWDAIKQSYE (213 aa)). 1D-myo-inositol 1,3,4-trisphosphate is bound by residues His-381 and Lys-415. Residues 404-415 (QEYIDHGSKIFK), Ser-430, and Ser-450 contribute to the ATP site. Positions 497, 511, and 513 each coordinate Mg(2+). 2 residues coordinate 1D-myo-inositol 1,3,4-trisphosphate: Asn-513 and Ser-517.

Belongs to the ITPK1 family. In terms of assembly, monomer. Requires Mg(2+) as cofactor. In terms of tissue distribution, highly expressed in embryos and at lower levels in roots, leaves, flowers and anthers.

The catalysed reaction is 1D-myo-inositol 3,4,5,6-tetrakisphosphate + ATP = 1D-myo-inositol 1,3,4,5,6-pentakisphosphate + ADP + H(+). It carries out the reaction 1D-myo-inositol 1,3,4-trisphosphate + ATP = 1D-myo-inositol 1,3,4,5-tetrakisphosphate + ADP + H(+). The enzyme catalyses 1D-myo-inositol 1,3,4-trisphosphate + ATP = 1D-myo-inositol 1,3,4,6-tetrakisphosphate + ADP + H(+). Its function is as follows. Kinase that can phosphorylate various inositol polyphosphate such as Ins(3,4,5,6)P4 or Ins(1,3,4)P3 and participates in phytic acid biosynthesis in developing seeds. Phytic acid is the primary storage form of phosphorus in cereal grains and other plant seeds. This is Inositol-tetrakisphosphate 1-kinase 6 (ITPK6) from Oryza sativa subsp. japonica (Rice).